A 223-amino-acid chain; its full sequence is MSFAQQKLSELAVSIPGATKIFREYDLDFCCGGSVLLEVAAQQKNLNLAEIEKRLTDLQQSKAENNDKDWTSASYAEMIDHIITRFHNRHREQLPELITLAEKVENIHGDRDDCPIGVVAQLEKIYAELSQHLMKEEQILFPMIKMGNYAMASMPIRVMEMEHDEAGQDVEVIKSLTNNCTPPADACFSWKALYSGINEFIDDLMHHIHLENNILFPRVLNEK.

It belongs to the RIC family.

It localises to the cytoplasm. Functionally, di-iron-containing protein involved in the repair of iron-sulfur clusters. The sequence is that of Probable iron-sulfur cluster repair protein HI_1677 from Haemophilus influenzae (strain ATCC 51907 / DSM 11121 / KW20 / Rd).